A 711-amino-acid polypeptide reads, in one-letter code: MKSLILAEKPSVARDIADALQINQKRNGYFENNQYIVTWALGHLVTNATPEQYDKNLKEWRLEDLPIIPKYMKTVVIGKTSKQFKTVKALILDNKVKDIIIATDAGREGELVARLILDKVGNKKPLRRLWISSVTKKAIQQGFKNLKDGRQYNDLYYAALARSEADWIVGINATRALTTKYDAQLSLGRVQTPTIQLVNTRQQEINQFKPQQYYTLSLTVKGFDFQLESNQRYTNKETLEQIVNNLKNVDGKIKSVATKHKKSYPQSLYNLTDLQQDMYRRYKIGPKETLNTLQSLYERHKVVTYPRTDSNYLTTDMVDTMKERIQATMATTYKDQARPLMSKTFSSKMSIFNNQKVSDHHAIIPTEVRPVMSDLSNRELKLYDMIVERFLEALMSPHEYDAITVTLEVAGHTFVLKENVTTVLGFKSIRQGESITEMQQPFSEGDEVKISKTNIREHETTPPEYFNEGSLLKAMENPQNFIQLKDKKYAQTLKQTGGIGTVATRADIIDKLFNMNAIESRDGKIKVTSKGKQILELAPEELTSPLLTAQWEEKLLLIERGKYQAKTFINEMKDFTKDVVNGIKNSDRKYKHDNLTTTECPTCGKFMIKVKTKNGQMLVCQDPSCKTKKNVQRKTNARCPNCKKKLTLFGKGKEAVYRCVCGHSETQAHMDQRMKSKSSGKVSRKEMKKYMNKNEGLDNNPFKDALKNLNL.

One can recognise a Toprim domain in the interval 2–135 (KSLILAEKPS…LRRLWISSVT (134 aa)). Positions 8 and 104 each coordinate Mg(2+). Positions 152-580 (YNDLYYAALA…EMKDFTKDVV (429 aa)) constitute a Topo IA-type catalytic domain. The interval 186 to 191 (SLGRVQ) is interaction with DNA. The active-site O-(5'-phospho-DNA)-tyrosine intermediate is Tyr305. The disordered stretch occupies residues 691–711 (MNKNEGLDNNPFKDALKNLNL).

It belongs to the type IA topoisomerase family. It depends on Mg(2+) as a cofactor.

It carries out the reaction ATP-independent breakage of single-stranded DNA, followed by passage and rejoining.. In terms of biological role, releases the supercoiling and torsional tension of DNA, which is introduced during the DNA replication and transcription, by transiently cleaving and rejoining one strand of the DNA duplex. Introduces a single-strand break via transesterification at a target site in duplex DNA. The scissile phosphodiester is attacked by the catalytic tyrosine of the enzyme, resulting in the formation of a DNA-(5'-phosphotyrosyl)-enzyme intermediate and the expulsion of a 3'-OH DNA strand. The free DNA strand then undergoes passage around the unbroken strand, thus removing DNA supercoils. Finally, in the religation step, the DNA 3'-OH attacks the covalent intermediate to expel the active-site tyrosine and restore the DNA phosphodiester backbone. The sequence is that of DNA topoisomerase 3 from Staphylococcus aureus (strain MRSA252).